Consider the following 500-residue polypeptide: Glycerol kinase (500 aa).

Thr17 contributes to the ADP binding site. ATP is bound by residues Thr17, Thr18, and Ser19. Thr17 serves as a coordination point for sn-glycerol 3-phosphate. Residue Arg21 participates in ADP binding. Residues Arg87, Glu88, Tyr139, and Asp243 each contribute to the sn-glycerol 3-phosphate site. 5 residues coordinate glycerol: Arg87, Glu88, Tyr139, Asp243, and Gln244. Residues Thr265 and Gly308 each coordinate ADP. ATP-binding residues include Thr265, Gly308, Gln312, and Gly409. ADP is bound by residues Gly409 and Asn413.

It belongs to the FGGY kinase family.

The catalysed reaction is glycerol + ATP = sn-glycerol 3-phosphate + ADP + H(+). It functions in the pathway polyol metabolism; glycerol degradation via glycerol kinase pathway; sn-glycerol 3-phosphate from glycerol: step 1/1. Its activity is regulated as follows. Inhibited by fructose 1,6-bisphosphate (FBP). Functionally, key enzyme in the regulation of glycerol uptake and metabolism. Catalyzes the phosphorylation of glycerol to yield sn-glycerol 3-phosphate. The polypeptide is Glycerol kinase (Pseudomonas fluorescens (strain Pf0-1)).